The chain runs to 342 residues: MNTNDFDFELPEELIAQTPLEKRDSSKLLIIDHRQKTMVDSHFDHIIDQLNPGDALVMNNTRVLPARLYGEKPDTHGHVELLLLKNTQGDQWEVLAKPAKRLKVGSQVNFGNGHLKATIIDELEHGGRIVEFSYDGIFLEVLESLGEMPLPPYIHEKLEDAERYQTVYAKENGSAAAPTAGLHFTTDLLKKIEAKGVHLVYLTLHVGLGTFRPVSVDNLDEHDMHSEFYSLSEEAAQTLRDVKQAGGRVVAVGTTSIRTLETIGSKFQGDIQADSGWTNIFIKPGYQFKVVDAFSTNFHLPKSTLVMLVSAFAGRDFVLEAYRHAVDEKYRFFSFGDAMFVN.

This sequence belongs to the QueA family. In terms of assembly, monomer.

Its subcellular location is the cytoplasm. The catalysed reaction is 7-aminomethyl-7-carbaguanosine(34) in tRNA + S-adenosyl-L-methionine = epoxyqueuosine(34) in tRNA + adenine + L-methionine + 2 H(+). It participates in tRNA modification; tRNA-queuosine biosynthesis. Its function is as follows. Transfers and isomerizes the ribose moiety from AdoMet to the 7-aminomethyl group of 7-deazaguanine (preQ1-tRNA) to give epoxyqueuosine (oQ-tRNA). The chain is S-adenosylmethionine:tRNA ribosyltransferase-isomerase from Streptococcus pyogenes serotype M2 (strain MGAS10270).